Reading from the N-terminus, the 256-residue chain is Aspirochlorine biosynthesis protein F (256 aa).

Asn19 is a glycosylation site (N-linked (GlcNAc...) asparagine). A run of 3 helical transmembrane segments spans residues 21–41 (SITPHLLLVGAQILFLSGPHF), 163–183 (LVWVLLMTDLVSQMMLRFFFT), and 214–234 (FGLGPYFFINMQYLVVSILAV).

The protein resides in the membrane. It functions in the pathway mycotoxin biosynthesis. Its function is as follows. Part of the gene cluster that mediates the biosynthesis of aspirochlorine (or antibiotic A30641), an unusual halogenated spiro compound with distinctive antifungal properties due to selective inhibition of protein biosynthesis, and which is also active against bacteria, viruses, and murine tumor cells. The non-ribosomal peptide synthetase (NRPS) aclP is responsible the formation of the diketopiperazine (DKP) core from the condensation of 2 phenylalanine residues. One Phe residue is tailored into chlorotyrosine by hydroxylation and chlorination, whereas the second Phe undergoes an unprecedented C-C bond cleavage to be converted into glycine. After formation of the DKP, sulfur is incorporated into the DKP by conjugation with glutathione by aclG, followed by its stepwise degradation to the thiol by aclI, aclJ and aclK, and the dithiol oxidation by aclT. In addition, oxygenases (aclB, aclC, aclL and aclO) and O-methyltransferases (aclM and aclU) act as tailoring enzymes to produce the intermediate dechloroaspirochlorine. Ultimately, chlorination of dechloroaspirochlorine by the halogenase aclH is the last step in the aspirochlorine pathway. This Aspergillus oryzae (strain ATCC 42149 / RIB 40) (Yellow koji mold) protein is Aspirochlorine biosynthesis protein F.